An 805-amino-acid chain; its full sequence is Polycystin-2-like protein 1 (805 aa).

The tract at residues 1 to 59 (MNAVGSPEGQELQKLGSGAWDNPAYSGPPSPHGTLRVCTISSTGPLQPQPKKPEDEPQE) is disordered. Residues 1–103 (MNAVGSPEGQ…ELYIKTTLRE (103 aa)) lie on the Cytoplasmic side of the membrane. The S-palmitoyl cysteine moiety is linked to residue C38. The helical transmembrane segment at 104–124 (LLVYIVFLVDICLLTYGMTSS) threads the bilayer. Over 125–356 (SAYYYTKVMS…NWDFFIVGCE (232 aa)) the chain is Extracellular. 2 N-linked (GlcNAc...) asparagine glycosylation sites follow: N177 and N207. C210 and C223 are oxidised to a cystine. N241 is a glycosylation site (N-linked (GlcNAc...) asparagine). A helical membrane pass occupies residues 357–376 (VIFCVFIFYYVVEEILELHI). 2 residues coordinate Ca(2+): E370 and E373. Residues 377–384 (HRLRYLSS) are Cytoplasmic-facing. A helical transmembrane segment spans residues 385–405 (IWNILDLVVILLSIVAVGFHI). Ca(2+) contacts are provided by N387 and D390. Residues 406-433 (FRTLEVNRLMGKLLQQPNTYADFEFLAF) are Extracellular-facing. A helical transmembrane segment spans residues 434 to 454 (WQTQYNNMNAVNLFFAWIKIF). Topologically, residues 455-479 (KYISFNKTMTQLSSTLARCAKDILG) are cytoplasmic. Residues 480–499 (FAVMFFIVFFAYAQLGYLLF) traverse the membrane as a helical segment. Topologically, residues 500 to 511 (GTQVENFSTFIK) are extracellular. N505 carries N-linked (GlcNAc...) asparagine glycosylation. The pore-forming intramembrane region spans 512 to 526 (CIFTQFRIILGDFDY). The Extracellular portion of the chain corresponds to 527-536 (NAIDNANRIL). A helical membrane pass occupies residues 537–557 (GPAYFVTYVFFVFFVLLNMFL). The Cytoplasmic portion of the chain corresponds to 558–805 (AIINDTYSEV…RGEIPTLQRS (248 aa)). Residues 633-668 (HEITELTATFTKFDRDGNRILDEKEQEKMRQDLEEE) enclose the EF-hand domain. Coiled coils occupy residues 650–686 (NRIL…IVSS) and 700–740 (GWVS…MLER). The required for homooligomerization stretch occupies residues 704-763 (GEEFYMLTRRVLQLETVLEGVVSQIDAVGSKLKMLERKGWLAPSPGVKEQAIWKHPQPAP). The segment at 759–805 (PQPAPAVTPDPWGVQGGQESEVPYKREEEALEERRLSRGEIPTLQRS) is disordered. A compositionally biased stretch (basic and acidic residues) spans 780-796 (VPYKREEEALEERRLSR).

Belongs to the polycystin family. Oligomer. Functional PKD2L1 homotetramer can be formed either through C-terminal trimerization followed by N-terminal dimerization of a fourth subunit with a subunit in the trimer or through dimerization followed by trimerization. Heterotetramer with either PKD1L1, PKD1L3 or PKD1; the heterotetrameric complex contains three PKD1L2 chains plus one chain from another family member. Interacts with PKD1L1, forming a ciliary calcium channel. Interacts with PKD1L3, forming a cation channel that is activated by low extracellular pH. Interacts with PKD1; this heteromeric functional cation channels is opened by hypo-osmotic stimulation. Interacts with RACK1; inhibits the channel activity possibly by impairing localization to the cell membrane. Palmitoylation is important for expression at the cell membrane and for channel activity. Detected in taste bud cells in fungiform papillae (at protein level). Ubiquitous. Expressed in adult heart, skeletal muscle, brain, spleen, testis, retina and liver. Isoform 4 appears to be expressed only in transformed lymphoblasts.

The protein resides in the cell projection. It localises to the cilium membrane. It is found in the cell membrane. Its subcellular location is the cytoplasmic vesicle. It carries out the reaction Ca(2+)(in) = Ca(2+)(out). The catalysed reaction is Na(+)(in) = Na(+)(out). The enzyme catalyses K(+)(in) = K(+)(out). It catalyses the reaction Mg(2+)(in) = Mg(2+)(out). The non-selective cation channel is gated following an off-response property by acid: gated open after the removal of acid stimulus, but not during acid application. Channel activity is inhibited by phosphatidylinositol-4,5-bisphosphate (PIP2). Non-selective cation channel activity is substantially increased when either the extracellular or intracellular calcium-ion concentration is raised. Regulation of non-selective cation channel activity by external calcium is bimodal, first sensitizing and subsequently inactivating the current. In terms of biological role, homotetrameric, non-selective cation channel that is permeable to sodium, potassium, magnesium and calcium. Also forms functionnal heteromeric channels with PKD1, PKD1L1 and PKD1L3. Pore-forming subunit of a heterotetrameric, non-selective cation channel, formed by PKD1L2 and PKD1L3, that is permeable to sodium, potassium, magnesium and calcium and which may act as a sour taste receptor in gustatory cells; however, its contribution to sour taste perception is unclear in vivo and may be indirect. The homomeric and heteromeric channels formed by PKD1L2 and PKD1L3 are activated by low pH and Ca(2+), but opens only when the extracellular pH rises again and after the removal of acid stimulus. Pore-forming subunit of a calcium-permeant ion channel formed by PKD1L2 and PKD1L1 in primary cilia, where it controls cilium calcium concentration, without affecting cytoplasmic calcium concentration, and regulates sonic hedgehog/SHH signaling and GLI2 transcription. The PKD1L1:PKD2L1 complex channel is mechanosensitive only at high pressures and is highly temperature sensitive. Pore-forming subunit of a calcium-permeant ion channel formed by PKD1L2 and PKD1 that produces a transient increase in intracellular calcium concentration upon hypo-osmotic stimulation (200 mOsm). May play a role in the perception of carbonation taste. May play a role in the sensory perception of water, via a mechanism that activates the channel in response to dilution of salivary bicarbonate and changes in salivary pH. This is Polycystin-2-like protein 1 from Homo sapiens (Human).